The following is a 387-amino-acid chain: UDP-N-acetylglucosamine--N-acetylmuramyl-(pentapeptide) pyrophosphoryl-undecaprenol N-acetylglucosamine transferase (387 aa).

The tract at residues 1–22 (MSEHVRSAGPPQASTAPSGGSA) is disordered. Residues 41–43 (TGG), N158, R194, S222, I276, and Q321 each bind UDP-N-acetyl-alpha-D-glucosamine.

Belongs to the glycosyltransferase 28 family. MurG subfamily.

The protein localises to the cell inner membrane. It carries out the reaction di-trans,octa-cis-undecaprenyl diphospho-N-acetyl-alpha-D-muramoyl-L-alanyl-D-glutamyl-meso-2,6-diaminopimeloyl-D-alanyl-D-alanine + UDP-N-acetyl-alpha-D-glucosamine = di-trans,octa-cis-undecaprenyl diphospho-[N-acetyl-alpha-D-glucosaminyl-(1-&gt;4)]-N-acetyl-alpha-D-muramoyl-L-alanyl-D-glutamyl-meso-2,6-diaminopimeloyl-D-alanyl-D-alanine + UDP + H(+). It functions in the pathway cell wall biogenesis; peptidoglycan biosynthesis. Its function is as follows. Cell wall formation. Catalyzes the transfer of a GlcNAc subunit on undecaprenyl-pyrophosphoryl-MurNAc-pentapeptide (lipid intermediate I) to form undecaprenyl-pyrophosphoryl-MurNAc-(pentapeptide)GlcNAc (lipid intermediate II). The polypeptide is UDP-N-acetylglucosamine--N-acetylmuramyl-(pentapeptide) pyrophosphoryl-undecaprenol N-acetylglucosamine transferase (Polaromonas sp. (strain JS666 / ATCC BAA-500)).